Consider the following 133-residue polypeptide: uncharacterized protein (133 aa).

The next 2 membrane-spanning stretches (helical) occupy residues Met-8 to Leu-28 and Ser-46 to Ala-66.

It is found in the membrane. This is an uncharacterized protein from Saccharomyces cerevisiae (strain ATCC 204508 / S288c) (Baker's yeast).